The following is a 227-amino-acid chain: Cytidylate kinase (227 aa).

Position 12–20 (12–20 (GPSGVGKGT)) interacts with ATP.

Belongs to the cytidylate kinase family. Type 1 subfamily.

Its subcellular location is the cytoplasm. It catalyses the reaction CMP + ATP = CDP + ADP. The catalysed reaction is dCMP + ATP = dCDP + ADP. This Shewanella denitrificans (strain OS217 / ATCC BAA-1090 / DSM 15013) protein is Cytidylate kinase.